The following is a 206-amino-acid chain: Repetitive proline-rich cell wall protein 1 (206 aa).

Residues 1–22 form the signal peptide; it reads MASSNFLVLLLFALFAIPQGLA. A run of 33 repeats spans residues 32–36, 37–41, 42–46, 47–51, 52–56, 57–61, 62–66, 67–71, 72–76, 77–81, 82–86, 87–91, 92–96, 97–101, 102–106, 107–111, 112–116, 117–121, 122–126, 127–131, 132–136, 137–141, 142–146, 147–151, 152–156, 157–161, 162–166, 167–171, 172–176, 177–181, 182–186, 187–191, and 192–196. The segment at 32-201 is 34 X 5 AA approximate tandem repeats of P-P-V-[EVY]-K; that stretch reads PPVYKPPVEK…PPVEKPPVYG (170 aa). A disordered region spans residues 51 to 84; sequence KPPVYKPPVEKPPVYKPPVYKPPVYKPPVVKPPV. Residues 132-206 form a disordered region; it reads PPVEKPPVYK…PPVYGPPHHP (75 aa). One copy of the 34; approximate repeat lies at 197–201; it reads PPVYG.

It belongs to the plant proline-rich protein superfamily. ENOD12 family. As to expression, expressed in hypocotyls, roots and mature root nodules.

It localises to the secreted. It is found in the cell wall. Its function is as follows. This is a developmentally regulated putative cell wall protein. In Medicago truncatula (Barrel medic), this protein is Repetitive proline-rich cell wall protein 1 (PRP1).